A 77-amino-acid polypeptide reads, in one-letter code: Putative defensin-like protein 160 (77 aa).

The N-terminal stretch at 1 to 24 (MAKLSCSYFFILMLVFSALLMVEC) is a signal peptide. Cystine bridges form between Cys30–Cys77, Cys40–Cys59, Cys45–Cys71, and Cys49–Cys73.

This sequence belongs to the DEFL family.

It is found in the secreted. This is Putative defensin-like protein 160 (LCR26) from Arabidopsis thaliana (Mouse-ear cress).